The following is a 166-amino-acid chain: NAD(P)H-quinone oxidoreductase subunit I, chloroplastic (166 aa).

4Fe-4S ferredoxin-type domains are found at residues 55 to 84 (GRIH…VDWK) and 95 to 124 (LNYS…MTEE). Residues C64, C67, C70, C74, C104, C107, C110, and C114 each contribute to the [4Fe-4S] cluster site.

Belongs to the complex I 23 kDa subunit family. As to quaternary structure, NDH is composed of at least 16 different subunits, 5 of which are encoded in the nucleus. [4Fe-4S] cluster is required as a cofactor.

It is found in the plastid. The protein localises to the chloroplast thylakoid membrane. The catalysed reaction is a plastoquinone + NADH + (n+1) H(+)(in) = a plastoquinol + NAD(+) + n H(+)(out). It catalyses the reaction a plastoquinone + NADPH + (n+1) H(+)(in) = a plastoquinol + NADP(+) + n H(+)(out). In terms of biological role, NDH shuttles electrons from NAD(P)H:plastoquinone, via FMN and iron-sulfur (Fe-S) centers, to quinones in the photosynthetic chain and possibly in a chloroplast respiratory chain. The immediate electron acceptor for the enzyme in this species is believed to be plastoquinone. Couples the redox reaction to proton translocation, and thus conserves the redox energy in a proton gradient. The polypeptide is NAD(P)H-quinone oxidoreductase subunit I, chloroplastic (Hulsea algida (Pacific hulsea)).